The sequence spans 256 residues: Acetyl-coenzyme A carboxylase carboxyl transferase subunit alpha (256 aa).

Residues methionine 1–glutamate 236 form the CoA carboxyltransferase C-terminal domain.

Belongs to the AccA family. In terms of assembly, acetyl-CoA carboxylase is a heterohexamer composed of biotin carboxyl carrier protein (AccB), biotin carboxylase (AccC) and two subunits each of ACCase subunit alpha (AccA) and ACCase subunit beta (AccD).

The protein resides in the cytoplasm. It carries out the reaction N(6)-carboxybiotinyl-L-lysyl-[protein] + acetyl-CoA = N(6)-biotinyl-L-lysyl-[protein] + malonyl-CoA. It participates in lipid metabolism; malonyl-CoA biosynthesis; malonyl-CoA from acetyl-CoA: step 1/1. Its function is as follows. Component of the acetyl coenzyme A carboxylase (ACC) complex. First, biotin carboxylase catalyzes the carboxylation of biotin on its carrier protein (BCCP) and then the CO(2) group is transferred by the carboxyltransferase to acetyl-CoA to form malonyl-CoA. The sequence is that of Acetyl-coenzyme A carboxylase carboxyl transferase subunit alpha from Streptococcus thermophilus (strain CNRZ 1066).